A 304-amino-acid chain; its full sequence is tRNA pseudouridine synthase B (304 aa).

Catalysis depends on Asp44, which acts as the Nucleophile.

Belongs to the pseudouridine synthase TruB family. Type 1 subfamily.

It carries out the reaction uridine(55) in tRNA = pseudouridine(55) in tRNA. Functionally, responsible for synthesis of pseudouridine from uracil-55 in the psi GC loop of transfer RNAs. This Novosphingobium aromaticivorans (strain ATCC 700278 / DSM 12444 / CCUG 56034 / CIP 105152 / NBRC 16084 / F199) protein is tRNA pseudouridine synthase B.